The sequence spans 1141 residues: Translocase of chloroplast 125, chloroplastic (1141 aa).

Disordered regions lie at residues 1-177 (MDAL…ISGY) and 325-431 (GFVE…EANE). Composition is skewed to basic and acidic residues over residues 57–72 (RVPEDVRSESEVKRDG) and 107–121 (IDGRFQFEDGVREDL). A compositionally biased stretch (acidic residues) spans 132–150 (YDDDDDDEEEEEDGSEEGE). A compositionally biased stretch (low complexity) spans 151–167 (STSSSIINSEYSSSASN). The span at 328 to 353 (EAEEAESDVFTEGEDGYDDEDEDGDI) shows a compositional bias: acidic residues. Composition is skewed to low complexity over residues 389 to 401 (RSSARRSAATTAT) and 408 to 429 (TASSTQSAATSDASISSESSEA). In terms of domain architecture, AIG1-type G spans 505 to 734 (DFACTILVLG…KLQEASTPGK (230 aa)). The G1 stretch occupies residues 514-521 (GKTGVGKS). A GTP-binding site is contributed by 517–522 (GVGKSA). Ser-521 contributes to the Mg(2+) binding site. Residues 541–545 (STTKV) are G2. The tract at residues 561–564 (DTPG) is G3. The tract at residues 633 to 636 (THAS) is G4. GTP is bound by residues His-634 and 682–683 (EN). Positions 682-684 (ENH) are G5. 2 disordered regions span residues 758-795 (QLKMPDEQHGESEDSDDDSDEEDEEEGDEYDDLPPFRP) and 832-871 (IRRRRERKKQASVMSKEEPSIPGDGAEDESGQPATVAVPM). The segment covering 770–789 (EDSDDDSDEEDEEEGDEYDD) has biased composition (acidic residues). Basic residues predominate over residues 832-841 (IRRRRERKKQ). A helical membrane pass occupies residues 1116-1136 (MVLIGIVPILRSLINCRFGFG).

This sequence belongs to the TRAFAC class TrmE-Era-EngA-EngB-Septin-like GTPase superfamily. AIG1/Toc34/Toc159-like paraseptin GTPase family. TOC159 subfamily. As to quaternary structure, part of the TOC core complex. Requires Mg(2+) as cofactor.

Its subcellular location is the plastid. The protein resides in the chloroplast outer membrane. Functionally, GTPase involved in protein precursor import into chloroplasts. Seems to recognize chloroplast-destined precursor proteins and regulate their presentation to the translocation channel through GTP hydrolysis. Probably specialized in the import of nuclear encoded non-photosynthetic preproteins from the cytoplasm to the chloroplast. In Physcomitrium patens (Spreading-leaved earth moss), this protein is Translocase of chloroplast 125, chloroplastic.